A 301-amino-acid polypeptide reads, in one-letter code: MTALSRVSGQAPDRVVETYAEGKPYDLFFLDVAGVRLVGRKTEAAYPGPDRDGLPAERLKCALVEARMLLGVVERDQVAEDHVAVFHRPLGEAEKAELFAAAVADPTTDLYYPYAQLGDRVRETEEGGWEVTDESARELDHAEEVLRDHVPDRLAELGFRGGVAYDAACSTGAFLQAVGRRFPGTRTIGQDLSPAMVARARTRLDEAHCGDGIRPAIPEASADLVVCRHLNAFVVGTGQAHDLLAAAASRCREGGLVVLLGHTPVLVSSQWCEMSGLTPLQRSGATPSGHALFQCYVLRKG.

As to quaternary structure, monomer.

It carries out the reaction nocardicin G + S-adenosyl-L-methionine = isonocardicin C + S-methyl-5'-thioadenosine + H(+). The catalysed reaction is nocardicin E + S-adenosyl-L-methionine = isonocardicin A + S-methyl-5'-thioadenosine + H(+). Its pathway is antibiotic biosynthesis. Involved in the biosynthesis of the beta-lactam antibiotic nocardicin A. In the presence of S-adenosyl-L-methionine (AdoMet), catalyzes the transfer of a 3-amino-3-carboxypropyl group from AdoMet to nocardicin G, forming isonocardicin C. Can also catalyze the transformation of nocardicin E and F to isonocardicin A and B, respectively, but in vivo substrate is probably nocardicin G. This Nocardia uniformis subsp. tsuyamanensis protein is Isonocardicin synthase.